A 271-amino-acid polypeptide reads, in one-letter code: MTYLQEASRNAITVPKLQAMRDAGEKIAMLTCYDASFAALLDRAGVDVLLIGDSLGNVLQGQTTTLPVSLADIAYHTASVARARPAALIVADLPFGTYGTPEDAFRSSVELMRAGAQMVKLEGGEWLADTVRFLVERSIPVCAHVGLTPQSVHAFGGFKVQGKTEAGATQLMRDSLAVQQAGAQLIVMEAIPTLLASDVTKQLRIPTIGIGAGLDCSGQVLVLHDMLGIFPGKRPRFVKDFMHGQPSILAAVEAYVAAVKDGSFPGPEHTF.

The Mg(2+) site is built by D53 and D92. Residues 53 to 54 (DS), D92, and K120 each bind 3-methyl-2-oxobutanoate. Position 122 (E122) interacts with Mg(2+). The Proton acceptor role is filled by E189.

This sequence belongs to the PanB family. Homodecamer; pentamer of dimers. Requires Mg(2+) as cofactor.

It localises to the cytoplasm. It carries out the reaction 3-methyl-2-oxobutanoate + (6R)-5,10-methylene-5,6,7,8-tetrahydrofolate + H2O = 2-dehydropantoate + (6S)-5,6,7,8-tetrahydrofolate. It functions in the pathway cofactor biosynthesis; (R)-pantothenate biosynthesis; (R)-pantoate from 3-methyl-2-oxobutanoate: step 1/2. Its function is as follows. Catalyzes the reversible reaction in which hydroxymethyl group from 5,10-methylenetetrahydrofolate is transferred onto alpha-ketoisovalerate to form ketopantoate. The polypeptide is 3-methyl-2-oxobutanoate hydroxymethyltransferase (Paraburkholderia phytofirmans (strain DSM 17436 / LMG 22146 / PsJN) (Burkholderia phytofirmans)).